Reading from the N-terminus, the 504-residue chain is One cut domain family member 2 (504 aa).

4 disordered regions span residues 29 to 95 (LGTL…GTAA), 166 to 189 (KFHH…RLSG), 274 to 332 (EQHL…QLEE), and 485 to 504 (WQDD…CTKA). Over residues 35-56 (PAGGGSGGGGGGGGGGGGGGPG) the composition is skewed to gly residues. A compositionally biased stretch (basic residues) spans 168-186 (HHPHPHHHPHHHHHHHHQR). Positions 324-410 (VATSGQLEEI…QRMSALRLAA (87 aa)) form a DNA-binding region, CUT. Positions 426–485 (QKKSRLVFTDLQRRTLFAIFKENKRPSKEMQITISQQLGLELTTVSNFFMNARRRSLEKW) form a DNA-binding region, homeobox. Low complexity predominate over residues 490-504 (STGGSSSTSSTCTKA).

Belongs to the CUT homeobox family.

The protein resides in the nucleus. In terms of biological role, transcriptional activator. Activates the transcription of a number of liver genes such as HNF3B. This Homo sapiens (Human) protein is One cut domain family member 2 (ONECUT2).